A 227-amino-acid chain; its full sequence is ATP phosphoribosyltransferase (227 aa).

It belongs to the ATP phosphoribosyltransferase family. Short subfamily. Heteromultimer composed of HisG and HisZ subunits.

It is found in the cytoplasm. The catalysed reaction is 1-(5-phospho-beta-D-ribosyl)-ATP + diphosphate = 5-phospho-alpha-D-ribose 1-diphosphate + ATP. The protein operates within amino-acid biosynthesis; L-histidine biosynthesis; L-histidine from 5-phospho-alpha-D-ribose 1-diphosphate: step 1/9. In terms of biological role, catalyzes the condensation of ATP and 5-phosphoribose 1-diphosphate to form N'-(5'-phosphoribosyl)-ATP (PR-ATP). Has a crucial role in the pathway because the rate of histidine biosynthesis seems to be controlled primarily by regulation of HisG enzymatic activity. The polypeptide is ATP phosphoribosyltransferase (Rhodospirillum rubrum (strain ATCC 11170 / ATH 1.1.1 / DSM 467 / LMG 4362 / NCIMB 8255 / S1)).